Reading from the N-terminus, the 96-residue chain is MRLFILLVALFVICACFDKFSLSKDKGTRANLKHPISRRVLRYERSVAYEDFPTPGEMTPKYVPIMDFAKVRPEIPSKTKHNSEFADADYQPDLDF.

Positions M1–A15 are cleaved as a signal peptide.

This is an uncharacterized protein from Caenorhabditis elegans.